The following is a 478-amino-acid chain: Putative sulfate transporter YbaR (478 aa).

The next 12 helical transmembrane spans lie at I19–I39, V42–G62, P65–D85, G87–I107, V121–F141, G143–P163, A168–V188, I220–A240, G259–I279, S295–V315, A345–D365, and L366–S386. The 90-residue stretch at K389–A478 folds into the STAS domain.

Belongs to the SLC26A/SulP transporter (TC 2.A.53) family.

The protein resides in the cell membrane. This is Putative sulfate transporter YbaR (ybaR) from Bacillus subtilis (strain 168).